We begin with the raw amino-acid sequence, 100 residues long: Protein translation factor SUI1 homolog (100 aa).

It belongs to the SUI1 family.

This Thermoplasma volcanium (strain ATCC 51530 / DSM 4299 / JCM 9571 / NBRC 15438 / GSS1) protein is Protein translation factor SUI1 homolog.